Here is a 529-residue protein sequence, read N- to C-terminus: Structure-specific endonuclease subunit SLX1 homolog 1 (529 aa).

The region spanning 4–89 is the GIY-YIG domain; the sequence is RFHCVYLLTS…PTKSTRLKTQ (86 aa). An SLX1-type zinc finger spans residues 231 to 364; it reads CALCSLPLRS…PCQPCPCPLC (134 aa). 3 disordered regions span residues 275–305, 409–437, and 470–501; these read VTMGQSTRNERSGEYSNKIKDDSNDGTMDAH, NSSLTERKSRRKATPALGQKRNRGEYCGD, and SVSLPPSRDEGYACDSSRRGVGGSKHTTRMTD. A compositionally biased stretch (basic and acidic residues) spans 282–297; that stretch reads RNERSGEYSNKIKDDS.

The protein belongs to the SLX1 family. As to quaternary structure, forms a heterodimer with a member of the SLX4 family. A divalent metal cation serves as cofactor.

It is found in the nucleus. In terms of biological role, catalytic subunit of a heterodimeric structure-specific endonuclease that resolves DNA secondary structures generated during DNA repair and recombination. Has endonuclease activity towards branched DNA substrates, introducing single-strand cuts in duplex DNA close to junctions with ss-DNA. This is Structure-specific endonuclease subunit SLX1 homolog 1 from Trypanosoma cruzi (strain CL Brener).